The primary structure comprises 102 residues: Small ribosomal subunit protein uS10 (102 aa).

It belongs to the universal ribosomal protein uS10 family. As to quaternary structure, part of the 30S ribosomal subunit.

In terms of biological role, involved in the binding of tRNA to the ribosomes. This is Small ribosomal subunit protein uS10 from Pediococcus pentosaceus (strain ATCC 25745 / CCUG 21536 / LMG 10740 / 183-1w).